Reading from the N-terminus, the 492-residue chain is Fascin-2 (492 aa).

Belongs to the fascin family. In terms of tissue distribution, localized specifically in the outer and inner segments of the photoreceptor cells in the retina.

The protein resides in the cytoplasm. It localises to the cytoskeleton. The protein localises to the cell projection. Its subcellular location is the stereocilium. In terms of biological role, acts as an actin bundling protein. May play a pivotal role in photoreceptor cell-specific events, such as disk morphogenesis. The polypeptide is Fascin-2 (FSCN2) (Homo sapiens (Human)).